The chain runs to 470 residues: FRIGIDA-like protein 1 (470 aa).

A coiled-coil region spans residues 336-369; that stretch reads KDQNLESEFTQEKVEERVEELEKNKALRKRNTTN. A disordered region spans residues 355–400; that stretch reads ELEKNKALRKRNTTNPPKQEPQQKGKKRTRDCKNGSQVPVPSQQLL. Residues 388-400 show a composition bias toward polar residues; the sequence is NGSQVPVPSQQLL.

This sequence belongs to the Frigida family. In terms of assembly, component of the transcription activator complex FRI-C composed of FRI, FRL1, SUF4, FLX and FES1. Interacts with FRI and SUF4. As to expression, expressed during seed development and in dry seed. Preferentially expressed in the chalazal endosperm during early stages of seed development.

Required for FRI-mediated up-regulation of FLC transcripts, but not redundant with FRI and only partially redundant with FRL2. Required for the stabilization of the FRI-C complex. In Arabidopsis thaliana (Mouse-ear cress), this protein is FRIGIDA-like protein 1 (FRL1).